A 279-amino-acid chain; its full sequence is Fructose-1,6-bisphosphatase class 1 (279 aa).

Residues Glu65, Asp85, Leu87, and Asp88 each coordinate Mg(2+). Substrate-binding positions include 88-91, Tyr190, and Lys221; that span reads DGSS. Position 227 (Glu227) interacts with Mg(2+).

It belongs to the FBPase class 1 family. In terms of assembly, homotetramer. Mg(2+) is required as a cofactor.

It is found in the cytoplasm. It carries out the reaction beta-D-fructose 1,6-bisphosphate + H2O = beta-D-fructose 6-phosphate + phosphate. The protein operates within carbohydrate biosynthesis; gluconeogenesis. This is Fructose-1,6-bisphosphatase class 1 from Helicobacter hepaticus (strain ATCC 51449 / 3B1).